Here is a 290-residue protein sequence, read N- to C-terminus: Putative neuropeptide Y receptor type 6 (290 aa).

At 1 to 39 (MEVSLNHPASNTTSTKNNNSAFFYFESCQPPSPALLLLC) the chain is on the extracellular side. Asparagine 11 carries N-linked (GlcNAc...) asparagine glycosylation. A helical membrane pass occupies residues 40–60 (IAYTVVLIVGLFGNLSLIIII). At 61 to 83 (FKKQRKAQNFTSILIANLSLSDT) the chain is on the cytoplasmic side. Residues 84 to 104 (LVCVMCIHFTIIYTLMDHWIF) traverse the membrane as a helical segment. The Extracellular portion of the chain corresponds to 105 to 111 (GDTMCRL). A disulfide bond links cysteine 109 and cysteine 196. Residues 112–132 (TSYVQSVSISVSIFSLVFTAV) traverse the membrane as a helical segment. The Cytoplasmic portion of the chain corresponds to 133 to 150 (ERYQLIVNPRGWKPSVTH). A helical transmembrane segment spans residues 151 to 171 (AYWGITLIWLFSLLLSIPFFL). Residues 172-206 (SYHLTDEPFRNLSLPTDLYTHQVACVENWPSKKDR) are Extracellular-facing. Residues 207 to 227 (LLFTTSLFLLQYFVPLGFILI) form a helical membrane-spanning segment. The Cytoplasmic portion of the chain corresponds to 228–258 (CYLKIVICLRRRNAKVDKKKENEGRLNENKR). Residues 259–279 (INTMLISIVVTFGACWLPRIS) form a helical membrane-spanning segment. At 280-290 (SMSSLTGIMRC) the chain is on the extracellular side.

This sequence belongs to the G-protein coupled receptor 1 family. Expressed in heart, skeletal muscle, gastrointestinal tissues, spleen, brain and adrenal glands.

Its subcellular location is the membrane. Functionally, when expressed, is unable to bind pancreatic polypeptide (PP), neuropeptide Y (NPY), or peptide YY (PYY), suggesting that either it is functionally inactive or that it may have acquired a pancreatic polypeptide-independent function. The chain is Putative neuropeptide Y receptor type 6 (NPY6R) from Homo sapiens (Human).